A 485-amino-acid polypeptide reads, in one-letter code: Programmed cell death protein 7 (485 aa).

The tract at residues 1–133 is disordered; the sequence is MALPPFFGQG…EAPPPPADVL (133 aa). Residues 12 to 48 show a composition bias toward pro residues; sequence PGPPPPQPPPPAPFGCPPPPLPSPAFPPPLPQRPGPF. The span at 49 to 71 shows a compositional bias: low complexity; it reads PGASAPFLQPPLALQPRASAEAS. Pro residues-rich tracts occupy residues 82 to 96 and 109 to 130; these read PVPP…PQCR and PPPP…PPPA. 2 coiled-coil regions span residues 232-335 and 362-411; these read VGEA…AAAR and RSEL…ESKL.

As to quaternary structure, interacts with RBM40. Component of the U11/U12 snRNPs that are part of the U12-type spliceosome.

The protein localises to the nucleus. Promotes apoptosis when overexpressed. In Homo sapiens (Human), this protein is Programmed cell death protein 7 (PDCD7).